The sequence spans 109 residues: Nucleoid-associated protein Caul_4574 (109 aa).

This sequence belongs to the YbaB/EbfC family. Homodimer.

The protein resides in the cytoplasm. It is found in the nucleoid. Functionally, binds to DNA and alters its conformation. May be involved in regulation of gene expression, nucleoid organization and DNA protection. The protein is Nucleoid-associated protein Caul_4574 of Caulobacter sp. (strain K31).